A 243-amino-acid polypeptide reads, in one-letter code: 7-cyano-7-deazaguanine synthase (243 aa).

14 to 24 provides a ligand contact to ATP; that stretch reads FSGGQDSATCL. Positions 202, 217, 220, and 223 each coordinate Zn(2+).

This sequence belongs to the QueC family. Requires Zn(2+) as cofactor.

The enzyme catalyses 7-carboxy-7-deazaguanine + NH4(+) + ATP = 7-cyano-7-deazaguanine + ADP + phosphate + H2O + H(+). It participates in purine metabolism; 7-cyano-7-deazaguanine biosynthesis. In terms of biological role, catalyzes the ATP-dependent conversion of 7-carboxy-7-deazaguanine (CDG) to 7-cyano-7-deazaguanine (preQ(0)). This Paraburkholderia phymatum (strain DSM 17167 / CIP 108236 / LMG 21445 / STM815) (Burkholderia phymatum) protein is 7-cyano-7-deazaguanine synthase.